We begin with the raw amino-acid sequence, 273 residues long: R-spondin-3 (273 aa).

The N-terminal stretch at 1-21 is a signal peptide; it reads MHLRLISWFFIILNFMEYIGS. 2 FU repeats span residues 35-86 and 92-135; these read PNVS…GYYG and INKC…GLEA. The N-linked (GlcNAc...) asparagine glycan is linked to asparagine 36. Intrachain disulfides connect cysteine 41/cysteine 48, cysteine 45/cysteine 54, cysteine 57/cysteine 76, cysteine 80/cysteine 95, cysteine 98/cysteine 105, cysteine 102/cysteine 111, cysteine 114/cysteine 125, cysteine 129/cysteine 142, cysteine 148/cysteine 190, cysteine 159/cysteine 166, and cysteine 199/cysteine 206. Positions 147-207 constitute a TSP type-1 domain; that stretch reads HCEASEWSPW…KCTVQRKKCP (61 aa). The segment at 201 to 273 is disordered; the sequence is VQRKKCPKGE…QKSVSVSTVH (73 aa). The span at 213 to 223 shows a compositional bias: basic residues; sequence RKGRERKRKKP. The span at 224–252 shows a compositional bias: basic and acidic residues; the sequence is NKEESKDAIPDNKGLEPSRETPEQRENKQ.

The protein belongs to the R-spondin family. Interacts with the extracellular domain of FZD8 and LRP6. It however does not form a ternary complex with FZD8 and LRP6. Interacts with WNT1. Binds heparin. Interacts with LGR4, LGR5 and LGR6.

The protein localises to the secreted. In terms of biological role, activator of the canonical Wnt signaling pathway by acting as a ligand for LGR4-6 receptors, which acts as a key regulator of angiogenesis. Upon binding to LGR4-6 (LGR4, LGR5 or LGR6), LGR4-6 associate with phosphorylated LRP6 and frizzled receptors that are activated by extracellular Wnt receptors, triggering the canonical Wnt signaling pathway to increase expression of target genes. Also regulates the canonical Wnt/beta-catenin-dependent pathway and non-canonical Wnt signaling by acting as an inhibitor of ZNRF3, an important regulator of the Wnt signaling pathway. Acts as a ligand for frizzled FZD8 and LRP6. May negatively regulate the TGF-beta pathway. Acts as a key regulator of angiogenesis by controlling vascular stability and pruning: acts by activating the non-canonical Wnt signaling pathway in endothelial cells. Can also amplify Wnt signaling pathway independently of LGR4-6 receptors, possibly by acting as a direct antagonistic ligand to RNF43 and ZNRF3. In Bos taurus (Bovine), this protein is R-spondin-3 (RSPO3).